A 496-amino-acid chain; its full sequence is Lysine--tRNA ligase (496 aa).

Residues Glu409 and Glu416 each coordinate Mg(2+).

It belongs to the class-II aminoacyl-tRNA synthetase family. As to quaternary structure, homodimer. The cofactor is Mg(2+).

Its subcellular location is the cytoplasm. The catalysed reaction is tRNA(Lys) + L-lysine + ATP = L-lysyl-tRNA(Lys) + AMP + diphosphate. In Streptococcus pneumoniae (strain CGSP14), this protein is Lysine--tRNA ligase.